Consider the following 828-residue polypeptide: Periplasmic nitrate reductase (828 aa).

Positions 1 to 31 form a signal peptide, tat-type signal; the sequence is MKLSRRSFMKANAVAAAAAAAGLSVPGVARA. The 57-residue stretch at 39-95 folds into the 4Fe-4S Mo/W bis-MGD-type domain; that stretch reads IKWDKAPCRFCGTGCGVLVGTQQGRVVACQGDPDAPVNRGLNCIKGYFLPKIMYGKD. [4Fe-4S] cluster is bound by residues Cys46, Cys49, Cys53, and Cys81. Residues Lys83, Gln150, Asn175, Cys179, 212–219, 243–247, 262–264, Met372, Gln376, Asn482, 508–509, Lys531, Asp558, and 718–727 each bind Mo-bis(molybdopterin guanine dinucleotide); these read WGSNMAEM, STFQH, QSD, SD, and TGRVLEHWHT. Residue Phe794 participates in substrate binding. Residues Asn802 and Lys819 each contribute to the Mo-bis(molybdopterin guanine dinucleotide) site.

The protein belongs to the prokaryotic molybdopterin-containing oxidoreductase family. NasA/NapA/NarB subfamily. In terms of assembly, component of the periplasmic nitrate reductase NapAB complex composed of NapA and NapB. It depends on [4Fe-4S] cluster as a cofactor. Mo-bis(molybdopterin guanine dinucleotide) is required as a cofactor. Post-translationally, predicted to be exported by the Tat system. The position of the signal peptide cleavage has not been experimentally proven.

The protein localises to the periplasm. The catalysed reaction is 2 Fe(II)-[cytochrome] + nitrate + 2 H(+) = 2 Fe(III)-[cytochrome] + nitrite + H2O. Catalytic subunit of the periplasmic nitrate reductase complex NapAB. Receives electrons from NapB and catalyzes the reduction of nitrate to nitrite. This Salmonella paratyphi C (strain RKS4594) protein is Periplasmic nitrate reductase.